We begin with the raw amino-acid sequence, 433 residues long: Trigger factor (433 aa).

The PPIase FKBP-type domain occupies 161 to 246; the sequence is GDRVTMDFVG…AKKVEARDLP (86 aa).

Belongs to the FKBP-type PPIase family. Tig subfamily.

Its subcellular location is the cytoplasm. The enzyme catalyses [protein]-peptidylproline (omega=180) = [protein]-peptidylproline (omega=0). Its function is as follows. Involved in protein export. Acts as a chaperone by maintaining the newly synthesized protein in an open conformation. Functions as a peptidyl-prolyl cis-trans isomerase. The chain is Trigger factor from Idiomarina loihiensis (strain ATCC BAA-735 / DSM 15497 / L2-TR).